We begin with the raw amino-acid sequence, 380 residues long: Two-component response regulator ORR28 (380 aa).

One can recognise a Response regulatory domain in the interval 13 to 130 (SAMVIDEDKC…TIQNLWQHLD (118 aa)). At Asp-65 the chain carries 4-aspartylphosphate. Positions 169-223 (RKYYLMWTPHLQKKFLHALEILGEGQISLMIMDVDNIDRKQISTHLQKHRLQLKK) form a DNA-binding region, myb-like GARP. Positions 225–245 (LSKASFTKGSNEDTSNPSAKN) are disordered. Residues 228–245 (ASFTKGSNEDTSNPSAKN) show a composition bias toward polar residues.

It belongs to the ARR family. Type-B subfamily. In terms of processing, two-component system major event consists of a His-to-Asp phosphorelay between a sensor histidine kinase (HK) and a response regulator (RR). In plants, the His-to-Asp phosphorelay involves an additional intermediate named Histidine-containing phosphotransfer protein (HPt). This multistep phosphorelay consists of a His-Asp-His-Asp sequential transfer of a phosphate group between first a His and an Asp of the HK protein, followed by the transfer to a conserved His of the HPt protein and finally the transfer to an Asp in the receiver domain of the RR protein.

The protein localises to the nucleus. Transcriptional activator that binds specific DNA sequence. Functions as a response regulator involved in His-to-Asp phosphorelay signal transduction system. Phosphorylation of the Asp residue in the receiver domain activates the ability of the protein to promote the transcription of target genes. May directly activate some type-A response regulators in response to cytokinins. In Oryza sativa subsp. indica (Rice), this protein is Two-component response regulator ORR28.